Consider the following 326-residue polypeptide: Glyoxylate/hydroxypyruvate reductase B (326 aa).

Active-site residues include arginine 237 and glutamate 266. Histidine 285 (proton donor) is an active-site residue.

The protein belongs to the D-isomer specific 2-hydroxyacid dehydrogenase family. GhrB subfamily. In terms of assembly, homodimer.

The protein localises to the cytoplasm. It carries out the reaction glycolate + NADP(+) = glyoxylate + NADPH + H(+). It catalyses the reaction (R)-glycerate + NAD(+) = 3-hydroxypyruvate + NADH + H(+). The catalysed reaction is (R)-glycerate + NADP(+) = 3-hydroxypyruvate + NADPH + H(+). Functionally, catalyzes the NADPH-dependent reduction of glyoxylate and hydroxypyruvate into glycolate and glycerate, respectively. This is Glyoxylate/hydroxypyruvate reductase B from Yersinia pseudotuberculosis serotype O:1b (strain IP 31758).